Reading from the N-terminus, the 554-residue chain is CTP synthase (554 aa).

The segment at 1–265 (MTPLIFVTGG…DELVIVQFKL (265 aa)) is amidoligase domain. Serine 13 contacts CTP. Serine 13 is a binding site for UTP. ATP is bound by residues 14–19 (SLGKGI) and aspartate 71. Mg(2+)-binding residues include aspartate 71 and glutamate 139. CTP-binding positions include 146–148 (DIE), 186–191 (KTKPTQ), and lysine 222. UTP-binding positions include 186–191 (KTKPTQ) and lysine 222. Residues 292-545 (TIAVVGKYVD…VRAAREKKAG (254 aa)) enclose the Glutamine amidotransferase type-1 domain. Glycine 353 provides a ligand contact to L-glutamine. The Nucleophile; for glutamine hydrolysis role is filled by cysteine 380. Residues 381–384 (YGMQ), glutamate 404, and arginine 471 contribute to the L-glutamine site. Residues histidine 518 and glutamate 520 contribute to the active site.

The protein belongs to the CTP synthase family. In terms of assembly, homotetramer.

It carries out the reaction UTP + L-glutamine + ATP + H2O = CTP + L-glutamate + ADP + phosphate + 2 H(+). It catalyses the reaction L-glutamine + H2O = L-glutamate + NH4(+). The enzyme catalyses UTP + NH4(+) + ATP = CTP + ADP + phosphate + 2 H(+). It functions in the pathway pyrimidine metabolism; CTP biosynthesis via de novo pathway; CTP from UDP: step 2/2. With respect to regulation, allosterically activated by GTP, when glutamine is the substrate; GTP has no effect on the reaction when ammonia is the substrate. The allosteric effector GTP functions by stabilizing the protein conformation that binds the tetrahedral intermediate(s) formed during glutamine hydrolysis. Inhibited by the product CTP, via allosteric rather than competitive inhibition. Catalyzes the ATP-dependent amination of UTP to CTP with either L-glutamine or ammonia as the source of nitrogen. Regulates intracellular CTP levels through interactions with the four ribonucleotide triphosphates. The polypeptide is CTP synthase (Xanthomonas oryzae pv. oryzae (strain MAFF 311018)).